We begin with the raw amino-acid sequence, 316 residues long: Methionyl-tRNA formyltransferase (316 aa).

Residue 111–114 (GLLP) participates in (6S)-5,6,7,8-tetrahydrofolate binding.

Belongs to the Fmt family.

The enzyme catalyses L-methionyl-tRNA(fMet) + (6R)-10-formyltetrahydrofolate = N-formyl-L-methionyl-tRNA(fMet) + (6S)-5,6,7,8-tetrahydrofolate + H(+). In terms of biological role, attaches a formyl group to the free amino group of methionyl-tRNA(fMet). The formyl group appears to play a dual role in the initiator identity of N-formylmethionyl-tRNA by promoting its recognition by IF2 and preventing the misappropriation of this tRNA by the elongation apparatus. This is Methionyl-tRNA formyltransferase from Chlamydia trachomatis serovar L2b (strain UCH-1/proctitis).